The primary structure comprises 1123 residues: Leucine-rich repeat receptor-like protein kinase PEPR1 (1123 aa).

Residues 1-28 form the signal peptide; it reads MKNLGGLFKILLLFFCLFLSTHIISVSC. At 29 to 769 the chain is on the extracellular side; that stretch reads LNSDGLTLLS…SRKSGLSTWQ (741 aa). Residues 31–53 form an LRR 1 repeat; that stretch reads SDGLTLLSLLKHLDRVPPQVTST. Residues Asn57, Asn81, Asn110, and Asn121 are each glycosylated (N-linked (GlcNAc...) asparagine). LRR repeat units follow at residues 74 to 98, 99 to 122, 124 to 145, 146 to 170, 171 to 194, 196 to 218, and 219 to 243; these read SKNV…IGEL, KSLQ…LGNC, KLAT…TLDS, LKRL…LFRI, PKLQ…IGDA, ELVE…IGNS, and SSLQ…NLLG. N-linked (GlcNAc...) asparagine glycosylation is found at Asn182 and Asn217. N-linked (GlcNAc...) asparagine glycosylation is found at Asn244, Asn252, Asn289, Asn302, Asn316, Asn321, and Asn337. LRR repeat units follow at residues 245–266, 267–290, 292–314, 315–338, 340–362, 363–386, 388–410, 412–434, 435–458, 459–482, 484–505, 506–529, 530–553, 554–577, 579–600, 601–625, 626–650, 652–674, 675–696, and 697–721; these read LTTL…SPNC, KNLL…LGNC, SLDA…LGML, KNLT…LGNC, SLNL…LGKL, RKLE…IWKS, SLTQ…MTEM, KLKI…LGVN, SSLE…LCHG, RKLR…IGHC, TIRR…FSQD, HSLS…LGSC, KNLS…LGNL, QNLG…LSNC, SLER…NFSN, WKGL…LPEL, KKLS…GLIE, LIYD…LGDL, IKLT…VLKG, and LTSL…LEGQ. Residues Asn398, Asn420, and Asn434 are each glycosylated (N-linked (GlcNAc...) asparagine). The N-linked (GlcNAc...) asparagine glycan is linked to Asn494. N-linked (GlcNAc...) asparagine glycosylation is found at Asn531, Asn536, Asn560, Asn591, and Asn597. 2 N-linked (GlcNAc...) asparagine glycosylation sites follow: Asn681 and Asn686. Residue Asn745 is glycosylated (N-linked (GlcNAc...) asparagine). Residues 770-790 form a helical membrane-spanning segment; sequence IVLIAVLSSLLVLVVVLALVF. Residues 791–1123 lie on the Cytoplasmic side of the membrane; it reads ICLRRRKGRP…ARSCSSDSVR (333 aa). Phosphothreonine is present on Thr824. Residues 827-1115 form the Protein kinase domain; that stretch reads LNEKYTIGRG…LLEDVKHLAR (289 aa). ATP-binding positions include 833–841 and Lys855; that span reads IGRGAHGIV. Tyr901 and Tyr941 each carry phosphotyrosine. The active-site Proton acceptor is Asp954. Tyr995 carries the phosphotyrosine modification.

The protein belongs to the protein kinase superfamily. Ser/Thr protein kinase family. In terms of assembly, interacts with PEP1 and BAK1. Interacts with BIK1 and PBL1. In terms of processing, N-glycosylated.

The protein localises to the cell membrane. It catalyses the reaction L-seryl-[protein] + ATP = O-phospho-L-seryl-[protein] + ADP + H(+). The catalysed reaction is L-threonyl-[protein] + ATP = O-phospho-L-threonyl-[protein] + ADP + H(+). Functionally, acts as a receptor for PEP defense peptides. Unlike typical immune receptors, senses an endogenous elicitor that potentiates pathogen-associated molecular pattern (PAMP)-inducible plant responses. Involved in PAMP-triggered immunity (PTI) signaling. Interacts with and phosphorylates the kinase BIK1, a central rate-limiting kinase in PTI signaling. The sequence is that of Leucine-rich repeat receptor-like protein kinase PEPR1 (PEPR1) from Arabidopsis thaliana (Mouse-ear cress).